The primary structure comprises 500 residues: Protein DETOXIFICATION 24 (500 aa).

The tract at residues 1–20 (MSTQEEMEERLLREGSDAEG) is disordered. 12 consecutive transmembrane segments (helical) span residues 48–67 (SSLFRMTSFGSIIVAQAFIG), 72–92 (LGLAAYALLQSTFIRFLYGLM), 124–144 (IVDMAVTTLFLPFIVLAGPIL), 160–180 (IYPWMIPYVYSLIFTMTIQMY), 188–208 (AIVGVLSTLSLALDLVVTWWC), 225–245 (VGSWAMVLAEFVYIFGGWCPF), 266–286 (ISSGFMICLEYWYMSILVLMA), 298–318 (AFSICQYIYTWELNICLGFLG), 342–362 (VILTISTLMGVIFSALCLAFC), 384–404 (VILAVSILLNSIQPILSGVAV), 411–431 (IVAVVNLASYYAIGIPLGLIL), and 441–461 (GLWSGMLAGIAIQTIILCYII).

It belongs to the multi antimicrobial extrusion (MATE) (TC 2.A.66.1) family.

It is found in the membrane. The polypeptide is Protein DETOXIFICATION 24 (Arabidopsis thaliana (Mouse-ear cress)).